Reading from the N-terminus, the 560-residue chain is Putative ABC transporter ATP-binding protein SP_0483 (560 aa).

ABC transporter domains follow at residues 6–247 and 297–528; these read IEWK…GIRE and FRLE…ANLK. Residues 40–47 and 329–336 contribute to the ATP site; these read GPSGSGKS and GKNGAGKS.

It belongs to the ABC transporter superfamily.

The protein localises to the cell membrane. Functionally, probably part of an ABC transporter complex. Responsible for energy coupling to the transport system. This is Putative ABC transporter ATP-binding protein SP_0483 from Streptococcus pneumoniae serotype 4 (strain ATCC BAA-334 / TIGR4).